The following is a 383-amino-acid chain: tRNA-specific 2-thiouridylase MnmA (383 aa).

Residues Gly-31–Ser-38 and Leu-57 each bind ATP. Cys-118 functions as the Nucleophile in the catalytic mechanism. Cysteines 118 and 217 form a disulfide. Gly-143 serves as a coordination point for ATP. The interval Lys-167–Gln-169 is interaction with tRNA. Residue Cys-217 is the Cysteine persulfide intermediate of the active site. Positions Arg-322 to Tyr-323 are interaction with tRNA.

It belongs to the MnmA/TRMU family.

It is found in the cytoplasm. The enzyme catalyses S-sulfanyl-L-cysteinyl-[protein] + uridine(34) in tRNA + AH2 + ATP = 2-thiouridine(34) in tRNA + L-cysteinyl-[protein] + A + AMP + diphosphate + H(+). In terms of biological role, catalyzes the 2-thiolation of uridine at the wobble position (U34) of tRNA, leading to the formation of s(2)U34. This Synechococcus sp. (strain RCC307) protein is tRNA-specific 2-thiouridylase MnmA.